The chain runs to 236 residues: Ribose-5-phosphate isomerase A (236 aa).

Residues 31–34 (TGST), 84–87 (DGAD), and 97–100 (KGGG) contribute to the substrate site. Glu-106 acts as the Proton acceptor in catalysis. Lys-124 serves as a coordination point for substrate.

Belongs to the ribose 5-phosphate isomerase family. In terms of assembly, homodimer.

The enzyme catalyses aldehydo-D-ribose 5-phosphate = D-ribulose 5-phosphate. The protein operates within carbohydrate degradation; pentose phosphate pathway; D-ribose 5-phosphate from D-ribulose 5-phosphate (non-oxidative stage): step 1/1. Catalyzes the reversible conversion of ribose-5-phosphate to ribulose 5-phosphate. This is Ribose-5-phosphate isomerase A from Polynucleobacter asymbioticus (strain DSM 18221 / CIP 109841 / QLW-P1DMWA-1) (Polynucleobacter necessarius subsp. asymbioticus).